A 228-amino-acid polypeptide reads, in one-letter code: UPF0758 protein CTC_02075 (228 aa).

The 123-residue stretch at 106-228 (NITNPKDAAY…YISLKEKDIL (123 aa)) folds into the MPN domain. Residues histidine 177, histidine 179, and aspartate 190 each coordinate Zn(2+). The JAMM motif signature appears at 177-190 (HNHPSGDTTPSKED).

Belongs to the UPF0758 family.

The chain is UPF0758 protein CTC_02075 from Clostridium tetani (strain Massachusetts / E88).